A 198-amino-acid chain; its full sequence is Recombination protein RecR (198 aa).

The C4-type zinc finger occupies 57–72; sequence CSICGHITDQDPCYIC. The Toprim domain occupies 80–175; the sequence is SVICVVQDPK…KLSRIAHGLP (96 aa).

Belongs to the RecR family.

Functionally, may play a role in DNA repair. It seems to be involved in an RecBC-independent recombinational process of DNA repair. It may act with RecF and RecO. The polypeptide is Recombination protein RecR (Bacillus velezensis (strain DSM 23117 / BGSC 10A6 / LMG 26770 / FZB42) (Bacillus amyloliquefaciens subsp. plantarum)).